The following is an 84-amino-acid chain: Small ribosomal subunit protein bS16 (84 aa).

It belongs to the bacterial ribosomal protein bS16 family.

In Delftia acidovorans (strain DSM 14801 / SPH-1), this protein is Small ribosomal subunit protein bS16.